The primary structure comprises 1187 residues: MEPGVSIESGSAIRVAVLPVGGPISPARLRDYAALVARHARVDLASLRPYYSEHQKSPFAHQPWGGGCLRLKFVLGGCVPSPWEDFQSSRKVLAVVGICHLPSSPDLGRVAADFVDAARSYPSALASRCFAFCPTDAQLVQKKRDNIIMFPPSDQQSLELHMLTMIQDLSASLLMEFEKWVLRAESTGTILKTPLDSQSSLGSEEVIKAKKRRLGRAQKIIGDYCLLAGSPADANAHYATAIELARLTGDVFWHAGALEGSVCALVVDRMAESDPVLEDEVKFRYYTIIQLYRRATLQDNAQRVSPVSFELEAALKLARYLCRRQCAKEVSDLLMGAADGAKALIDASDRLILYIEIARLFGTLGYKRKAAFFSRQVAQLYLQQDNAYAAMSAMQVLTTTTTAYHVQSRKTSKMDHGLLKSVVSLFESQWSTLQMVVLREILMSSIRAADPLSSWSAAARLLRSFYPLITPAGQSGLASSLSNSADKLPSGTRCADPCLPFIRLHSFPLHPSQREIVKRNPNKKEWWTGGGPSGPFIYTPFTKGGTSGTSKQEVNWIVGEPVQVMVELANPCSFDLIVESIYLSVHSGNFDAFPVSVNLPPNTSKLVLLSGIPTQVGQVSIPGCIVHCFGVITEHLFKEVDCLLLGAAQGLVLSDPFRCCGSSKFKSVNFPSISVVPPLPLLVANVVGGDGSILLYEGEIRDVLITLTNAGTVPVEEANVALSGKNQDSVISIAHSTWKSALPIKPGGEVTFAVTLRAWHLSPTDLEADGSRSPANSRRIAREGSNPFLDIHYAGPSGNSESNDVSLPPGRRLVVPLNICVVQGMRLVRARLLSMELPARFTDAHLRSVSSKDNLSNGSDAIRNDISLLKIDPYKGSWDLRLLELELFNPTDVVFDVDVSVHLDGTSVEQKILPEDKTASSACHKTRIDRDYSARVLIPLEHFKLPVLDTSFFVKENGSDEPLGSRAATLAEKNAKAELNASINNLISKIKVKWHSGRNSSGELNIKDAIQTALQASIMDILLPDPLTFSFRHAKDGTTAKTDSSKEPGDGSSRSADESVLRCKDPIFANEMTHMEVQIRNNTKETIRMNLSISCKDVAGENCFDENSATVLWAGVLSDIYLEVQPLQEVVHPFSIYFLVPGDYSLQAASVIIDATDVLRARAKAESPDEPILCRGSPFHIHVVGTA.

Residues 1037–1059 (GTTAKTDSSKEPGDGSSRSADES) form a disordered region.

Belongs to the TRS120 family. Part of the multisubunit TRAPP (transport protein particle) II complex composed of BET3, BET5, TRS20, TRS23, TRS31, TRS33, TRS65, TRS85, TRS120 and TRS130.

It localises to the golgi apparatus. The protein localises to the trans-Golgi network. It is found in the early endosome. Its function is as follows. Specific subunit of the TRAPP II complex, a highly conserved vesicle tethering complex that is required for the proper transport of proteins in post-Golgi trafficking pathways to the growing cell plate in mitotic active cells. In Oryza sativa subsp. japonica (Rice), this protein is Trafficking protein particle complex II-specific subunit 120 homolog.